The chain runs to 195 residues: Ras-related protein Rab-31 (195 aa).

GTP contacts are provided by Gly16, Gly18, Lys19, Ser20, Ser21, Asp32, and His33. Mg(2+) is bound at residue Ser20. 2 short sequence motifs (switch) span residues 30–42 and 63–79; these read HFDH…IGAS and AGQE…YRGS. Ser36 bears the Phosphoserine mark. Residues Thr38, Gly64, Asn119, Asp122, Ala150, and Lys151 each coordinate GTP. Thr38 is a Mg(2+) binding site. Residues Cys194 and Cys195 are each lipidated (S-geranylgeranyl cysteine).

It belongs to the small GTPase superfamily. Rab family. As to quaternary structure, interacts with OCRL. Interacts with NGFR. Interacts (in GDP-bound form) with RIN3 and GAPVD1, which function as guanine exchange factors (GEF). Interacts (in GTP-bound form) with EEA1. Interacts with EGFR. Interacts (in GTP-bound form) with APPL2; interaction contributes to or enhances recruitment of APPL2 to the phagosomes; interaction enhances Fc-gamma receptor-mediated phagocytosis through PI3K/Akt signaling in macrophages. Mg(2+) is required as a cofactor. Highest expression in placenta and brain with lower levels in heart and lung. Not detected in liver, skeletal muscle, kidney or pancreas.

Its subcellular location is the golgi apparatus. It is found in the trans-Golgi network. The protein resides in the trans-Golgi network membrane. The protein localises to the early endosome. It localises to the cytoplasmic vesicle. Its subcellular location is the phagosome. It is found in the phagosome membrane. It catalyses the reaction GTP + H2O = GDP + phosphate + H(+). Its activity is regulated as follows. Regulated by guanine nucleotide exchange factors (GEFs) including RIN3 and GAPVD1 which promote the exchange of bound GDP for free GTP. Regulated by GTPase activating proteins (GAPs) which increase the GTP hydrolysis activity. Inhibited by GDP dissociation inhibitors (GDIs) which prevent Rab-GDP dissociation. Its function is as follows. The small GTPases Rab are key regulators of intracellular membrane trafficking, from the formation of transport vesicles to their fusion with membranes. Rabs cycle between an inactive GDP-bound form and an active GTP-bound form that is able to recruit to membranes different set of downstream effectors directly responsible for vesicle formation, movement, tethering and fusion. Required for the integrity and for normal function of the Golgi apparatus and the trans-Golgi network. Plays a role in insulin-stimulated translocation of GLUT4 to the cell membrane. Plays a role in M6PR transport from the trans-Golgi network to endosomes. Plays a role in the internalization of EGFR from the cell membrane into endosomes. Plays a role in the maturation of phagosomes that engulf pathogens, such as S.aureus and M.tuberculosis. The polypeptide is Ras-related protein Rab-31 (Homo sapiens (Human)).